A 362-amino-acid chain; its full sequence is 3-dehydroquinate synthase (362 aa).

Residues Asp70 to Lys75, Gly104 to Asp108, Thr128 to Thr129, Lys141, and Lys150 each bind NAD(+). Zn(2+) is bound by residues Glu183, His246, and His263.

It belongs to the sugar phosphate cyclases superfamily. Dehydroquinate synthase family. It depends on Co(2+) as a cofactor. Zn(2+) serves as cofactor. NAD(+) is required as a cofactor.

The protein localises to the cytoplasm. The enzyme catalyses 7-phospho-2-dehydro-3-deoxy-D-arabino-heptonate = 3-dehydroquinate + phosphate. It functions in the pathway metabolic intermediate biosynthesis; chorismate biosynthesis; chorismate from D-erythrose 4-phosphate and phosphoenolpyruvate: step 2/7. Functionally, catalyzes the conversion of 3-deoxy-D-arabino-heptulosonate 7-phosphate (DAHP) to dehydroquinate (DHQ). In Saccharophagus degradans (strain 2-40 / ATCC 43961 / DSM 17024), this protein is 3-dehydroquinate synthase.